The sequence spans 295 residues: Ribosomal RNA small subunit methyltransferase H (295 aa).

Residues 32–34 (GGY), Asp50, Phe77, Asp98, and Gln105 contribute to the S-adenosyl-L-methionine site. The tract at residues 275–295 (KEISENTRSRSAKLRGIVKEE) is disordered.

This sequence belongs to the methyltransferase superfamily. RsmH family.

Its subcellular location is the cytoplasm. It catalyses the reaction cytidine(1402) in 16S rRNA + S-adenosyl-L-methionine = N(4)-methylcytidine(1402) in 16S rRNA + S-adenosyl-L-homocysteine + H(+). Specifically methylates the N4 position of cytidine in position 1402 (C1402) of 16S rRNA. The sequence is that of Ribosomal RNA small subunit methyltransferase H from Anaplasma phagocytophilum (strain HZ).